The primary structure comprises 154 residues: 3-hydroxyacyl-[acyl-carrier-protein] dehydratase FabZ (154 aa).

Histidine 59 is a catalytic residue.

The protein belongs to the thioester dehydratase family. FabZ subfamily.

It localises to the cytoplasm. It carries out the reaction a (3R)-hydroxyacyl-[ACP] = a (2E)-enoyl-[ACP] + H2O. Involved in unsaturated fatty acids biosynthesis. Catalyzes the dehydration of short chain beta-hydroxyacyl-ACPs and long chain saturated and unsaturated beta-hydroxyacyl-ACPs. The sequence is that of 3-hydroxyacyl-[acyl-carrier-protein] dehydratase FabZ from Bartonella bacilliformis (strain ATCC 35685 / KC583 / Herrer 020/F12,63).